A 1353-amino-acid polypeptide reads, in one-letter code: Adenylate cyclase type 9 (1353 aa).

2 disordered regions span residues Met1 to Ser27 and Ser49 to Gly71. At Met1–Arg117 the chain is on the cytoplasmic side. Polar residues predominate over residues Glu16–Ser27. A compositionally biased stretch (low complexity) spans Ser49 to Arg66. A helical transmembrane segment spans residues Tyr118–Met138. Residues Arg139–Arg141 are Extracellular-facing. The helical transmembrane segment at Leu142–Phe162 threads the bilayer. Residues Thr163 to His171 are Cytoplasmic-facing. A helical membrane pass occupies residues Tyr172–Phe192. Residues Gln193 to Asp215 are Extracellular-facing. N-linked (GlcNAc...) asparagine glycosylation occurs at Asn206. The helical transmembrane segment at Thr216–Tyr235 threads the bilayer. Residues Thr236–Pro241 lie on the Cytoplasmic side of the membrane. The helical transmembrane segment at Leu242 to Phe259 threads the bilayer. Residues Gly260–Glu280 lie on the Extracellular side of the membrane. Residues Leu281–Met301 traverse the membrane as a helical segment. Topologically, residues Ser302 to Ser786 are cytoplasmic. Positions Gln349–Ile375 are disordered. Residues Lys359–Ser374 show a composition bias toward basic residues. The Guanylate cyclase 1 domain occupies Ser394–Glu521. Mg(2+) is bound by residues Asp399, Ile400, and Asp443. ATP is bound by residues Asp399 to Thr404, Leu441 to Asp443, and Arg487. Residue Ser610 is modified to Phosphoserine. Residues Glu642 to Lys684 form a disordered region. A phosphoserine mark is found at Ser688, Ser691, and Ser706. Residues Ser787 to Leu807 traverse the membrane as a helical segment. Over Lys808 to Pro818 the chain is Extracellular. Residues Ala819–Ile839 traverse the membrane as a helical segment. The Cytoplasmic portion of the chain corresponds to Arg840–Cys867. The chain crosses the membrane as a helical span at residues Ile868–Tyr888. The Extracellular segment spans residues Glu889 to Asn891. A helical transmembrane segment spans residues Ile892–Phe912. At Cys913–Arg920 the chain is on the cytoplasmic side. The chain crosses the membrane as a helical span at residues Ser921 to Pro941. The Extracellular portion of the chain corresponds to Asp942–Ala975. N-linked (GlcNAc...) asparagine glycans are attached at residues Asn955 and Asn964. Residues Ser976 to Leu996 form a helical membrane-spanning segment. The Cytoplasmic segment spans residues Asn997–Val1353. Residues Gly1058–Asp1198 form the Guanylate cyclase 2 domain. ATP is bound by residues Lys1108, Asp1185–Trp1187, Asn1192–Arg1196, and Lys1232. Phosphoserine occurs at positions 1257, 1259, 1295, and 1307. Over residues Ser1292–Ala1301 the composition is skewed to polar residues. The interval Ser1292–Lys1326 is disordered. Positions Lys1302–Lys1326 are enriched in basic and acidic residues.

This sequence belongs to the adenylyl cyclase class-4/guanylyl cyclase family. The cofactor is Mg(2+). Requires Mn(2+) as cofactor. Detected in skeletal muscle, pancreas, lung, heart, kidney, liver, brain and placenta. Expressed in multiple cells of the lung, with expression highest in airway smooth muscle.

The protein localises to the cell membrane. The enzyme catalyses ATP = 3',5'-cyclic AMP + diphosphate. Insensitive to calcium/calmodulin, forskolin and somatostatin. Stimulated by beta-adrenergic receptor activation. Activity is down-regulated by calcium/calcineurin. Its function is as follows. Adenylyl cyclase that catalyzes the formation of the signaling molecule cAMP in response to activation of G protein-coupled receptors. Contributes to signaling cascades activated by CRH (corticotropin-releasing factor), corticosteroids and beta-adrenergic receptors. The protein is Adenylate cyclase type 9 (ADCY9) of Homo sapiens (Human).